The chain runs to 212 residues: Sclerostin (212 aa).

The N-terminal stretch at 1-23 (MQLSLALCLVCLLVHAAFRVVEG) is a signal peptide. A glycan (N-linked (GlcNAc...) asparagine) is linked at Asn52. 4 disulfide bridges follow: Cys79–Cys133, Cys93–Cys147, Cys104–Cys164, and Cys108–Cys166. In terms of domain architecture, CTCK spans 81–171 (ELHFTRYVTD…ASCKCKRLTR (91 aa)). The N-linked (GlcNAc...) asparagine glycan is linked to Asn174. Residues 179–212 (KDFGPEAARPQTGRKLRPRARGTKASRAELENAY) are disordered. The segment covering 190–202 (TGRKLRPRARGTK) has biased composition (basic residues).

Belongs to the sclerostin family. As to quaternary structure, interacts with LRP4 (via the extracellular domain); the interaction facilitates the inhibition of Wnt signaling. Interacts with LRP5 (via the first two YWTD-EGF repeat domains); the interaction inhibits Wnt-mediated signaling. Interacts with LRP6.

The protein localises to the secreted. The protein resides in the extracellular space. Its subcellular location is the extracellular matrix. In terms of biological role, negative regulator of bone growth that acts through inhibition of Wnt signaling and bone formation. The polypeptide is Sclerostin (Bos taurus (Bovine)).